Reading from the N-terminus, the 346-residue chain is MKKAAIIGGTGYGAIELIRLLDSHPYIELAKIISQSQHGELLDETYPHLATYVTQPMQELHIQQLIEEIDIVFLATPAGVAKEIAASFLDSSIQCIDLSGDLRLSSSDYEMWYQKKPASEALLEKTAYGLTEVFQEKIKQANIISNPGCFPTAALLGLIPMLENNIIESKGIMIDGKTGISGAGKNSSAKTHFSTTNENVTPYKIGTHQHIPEIEKYLSQHVEESSVRVTLTTHLIPMTRGLMCTMYAPLQQDIDTADVIDLYKHYYEQSSFIRIRKQGEYPSTKDVTGSNYCDIGAYVDKRTNQLIISSAIDNLVKGAAGQAIQNINVMNGWDEKTGLSFLPVYP.

The active site involves Cys-149.

It belongs to the NAGSA dehydrogenase family. Type 1 subfamily.

The protein resides in the cytoplasm. It carries out the reaction N-acetyl-L-glutamate 5-semialdehyde + phosphate + NADP(+) = N-acetyl-L-glutamyl 5-phosphate + NADPH + H(+). The protein operates within amino-acid biosynthesis; L-arginine biosynthesis; N(2)-acetyl-L-ornithine from L-glutamate: step 3/4. Functionally, catalyzes the NADPH-dependent reduction of N-acetyl-5-glutamyl phosphate to yield N-acetyl-L-glutamate 5-semialdehyde. In Oceanobacillus iheyensis (strain DSM 14371 / CIP 107618 / JCM 11309 / KCTC 3954 / HTE831), this protein is N-acetyl-gamma-glutamyl-phosphate reductase.